Reading from the N-terminus, the 437-residue chain is Vasoactive intestinal polypeptide receptor 2 (437 aa).

Residues 1 to 22 (MRASVVLTCYCWLLVRVSSIHP) form the signal peptide. At 23–123 (ECRFHLEIQE…EDESKITFYI (101 aa)) the chain is on the extracellular side. Cystine bridges form between cysteine 37–cysteine 60, cysteine 51–cysteine 92, and cysteine 74–cysteine 108. 3 N-linked (GlcNAc...) asparagine glycosylation sites follow: asparagine 57, asparagine 87, and asparagine 91. The helical transmembrane segment at 124–149 (LVKAIYTLGYSVSLMSLTTGSIIICL) threads the bilayer. At 150–157 (FRKLHCTR) the chain is on the cytoplasmic side. A helical membrane pass occupies residues 158–179 (NYIHLNLFLSFMLRAISVLVKD). Over 180–202 (SVLYSSSGTLRCHDQPGSWVGCK) the chain is Extracellular. A disulfide bridge links cysteine 201 with cysteine 270. A helical transmembrane segment spans residues 203-227 (LSLVFFQYCIMANFYWLLVEGLYLH). At 228 to 238 (TLLVAILPPSR) the chain is on the cytoplasmic side. Residues 239–260 (CFLAYLLIGWGIPSVCIGAWIA) traverse the membrane as a helical segment. At 261–279 (TRLSLEDTGCWDTNDHSIP) the chain is on the extracellular side. Residues 280-303 (WWVIRMPILISIVVNFALFISIVR) traverse the membrane as a helical segment. Residues 304–324 (ILLQKLTSPDVGGNDQSQYKR) lie on the Cytoplasmic side of the membrane. Residues 325–345 (LAKSTLLLIPLFGVHYMVFAA) form a helical membrane-spanning segment. The Extracellular portion of the chain corresponds to 346–353 (FPIGISST). Residues 354–377 (YQILFELCVGSFQGLVVAVLYCFL) form a helical membrane-spanning segment. Topologically, residues 378–437 (NSEVQCELKRRWRGLCLTQPGSRDYRLHSWSMSRNGSESALQIHRGSRTQSFLQSETSVI) are cytoplasmic.

Belongs to the G-protein coupled receptor 2 family. In terms of assembly, interacts with ADCYAP1/PACAP (via N-terminal extracellular domain); activated by PACAP27 and CAPAC38 neuropeptides. Interacts with VIP; the interaction results in VIPR1 activation. As to expression, mainly in the thalamus, hippocampus and in the suprachiasmatic nucleus.

The protein resides in the cell membrane. Functionally, g protein-coupled receptor activated by the neuropeptides vasoactive intestinal peptide (VIP) and pituitary adenylate cyclase-activating polypeptide (ADCYAP1/PACAP). Binds VIP and both PACAP27 and PACAP38 bioactive peptides with the order of ligand affinity of VIP = PACAP38 &gt; PACAP27. Ligand binding causes a conformation change that triggers signaling via guanine nucleotide-binding proteins (G proteins) and modulates the activity of downstream effectors. Activates cAMP-dependent pathway. May be coupled to phospholipase C. The protein is Vasoactive intestinal polypeptide receptor 2 of Rattus norvegicus (Rat).